A 382-amino-acid polypeptide reads, in one-letter code: Quinolinate synthase (382 aa).

Positions 63 and 84 each coordinate iminosuccinate. Position 129 (C129) interacts with [4Fe-4S] cluster. Residues 155–157 (YAN) and S172 contribute to the iminosuccinate site. Residue C216 coordinates [4Fe-4S] cluster. Residues 242 to 244 (HPE) and T259 contribute to the iminosuccinate site. Position 313 (C313) interacts with [4Fe-4S] cluster.

The protein belongs to the quinolinate synthase family. Type 1 subfamily. [4Fe-4S] cluster serves as cofactor.

Its subcellular location is the cytoplasm. The catalysed reaction is iminosuccinate + dihydroxyacetone phosphate = quinolinate + phosphate + 2 H2O + H(+). The protein operates within cofactor biosynthesis; NAD(+) biosynthesis; quinolinate from iminoaspartate: step 1/1. Functionally, catalyzes the condensation of iminoaspartate with dihydroxyacetone phosphate to form quinolinate. In Ralstonia pickettii (strain 12J), this protein is Quinolinate synthase.